The chain runs to 147 residues: Male-specific protein scotti (147 aa).

The tract at residues glutamate 57 to arginine 76 is disordered. Asparagine 128 is a glycosylation site (N-linked (GlcNAc...) asparagine).

The protein belongs to the male-specific scotti family.

Post-meiotically transcribed gene that has a role in late spermiogenesis; required for actin cone progression during spermatid individualization. The polypeptide is Male-specific protein scotti (Drosophila simulans (Fruit fly)).